The chain runs to 309 residues: tRNA pseudouridine synthase B (309 aa).

Residue Asp39 is the Nucleophile of the active site. In terms of domain architecture, PUA spans 229–306; sequence LPRVVVHQES…ERVLTLRKVF (78 aa).

This sequence belongs to the pseudouridine synthase TruB family. Type 1 subfamily.

The catalysed reaction is uridine(55) in tRNA = pseudouridine(55) in tRNA. Its function is as follows. Responsible for synthesis of pseudouridine from uracil-55 in the psi GC loop of transfer RNAs. The polypeptide is tRNA pseudouridine synthase B (Thermotoga petrophila (strain ATCC BAA-488 / DSM 13995 / JCM 10881 / RKU-1)).